Consider the following 277-residue polypeptide: Large ribosomal subunit protein uL2 (277 aa).

The interval Gly222–Lys277 is disordered. Residues Ala264–Lys277 are compositionally biased toward basic and acidic residues.

Belongs to the universal ribosomal protein uL2 family. As to quaternary structure, part of the 50S ribosomal subunit. Forms a bridge to the 30S subunit in the 70S ribosome.

In terms of biological role, one of the primary rRNA binding proteins. Required for association of the 30S and 50S subunits to form the 70S ribosome, for tRNA binding and peptide bond formation. It has been suggested to have peptidyltransferase activity; this is somewhat controversial. Makes several contacts with the 16S rRNA in the 70S ribosome. The polypeptide is Large ribosomal subunit protein uL2 (Streptococcus thermophilus (strain CNRZ 1066)).